Consider the following 602-residue polypeptide: Elongation factor 4 (602 aa).

Residues 8 to 189 form the tr-type G domain; that stretch reads KNIRNFSIIA…KIITTIPAPS (182 aa). GTP-binding positions include 20–25 and 136–139; these read DHGKST and NKID.

Belongs to the TRAFAC class translation factor GTPase superfamily. Classic translation factor GTPase family. LepA subfamily.

It localises to the cell inner membrane. It carries out the reaction GTP + H2O = GDP + phosphate + H(+). In terms of biological role, required for accurate and efficient protein synthesis under certain stress conditions. May act as a fidelity factor of the translation reaction, by catalyzing a one-codon backward translocation of tRNAs on improperly translocated ribosomes. Back-translocation proceeds from a post-translocation (POST) complex to a pre-translocation (PRE) complex, thus giving elongation factor G a second chance to translocate the tRNAs correctly. Binds to ribosomes in a GTP-dependent manner. This chain is Elongation factor 4, found in Helicobacter pylori (strain ATCC 700392 / 26695) (Campylobacter pylori).